We begin with the raw amino-acid sequence, 954 residues long: Glycine dehydrogenase (decarboxylating) (954 aa).

Residues methionine 1–glutamate 13 show a composition bias toward polar residues. Positions methionine 1–serine 24 are disordered. Lysine 704 carries the N6-(pyridoxal phosphate)lysine modification.

It belongs to the GcvP family. In terms of assembly, the glycine cleavage system is composed of four proteins: P, T, L and H. Pyridoxal 5'-phosphate is required as a cofactor.

It catalyses the reaction N(6)-[(R)-lipoyl]-L-lysyl-[glycine-cleavage complex H protein] + glycine + H(+) = N(6)-[(R)-S(8)-aminomethyldihydrolipoyl]-L-lysyl-[glycine-cleavage complex H protein] + CO2. Its function is as follows. The glycine cleavage system catalyzes the degradation of glycine. The P protein binds the alpha-amino group of glycine through its pyridoxal phosphate cofactor; CO(2) is released and the remaining methylamine moiety is then transferred to the lipoamide cofactor of the H protein. This Vibrio campbellii (strain ATCC BAA-1116) protein is Glycine dehydrogenase (decarboxylating).